Here is a 219-residue protein sequence, read N- to C-terminus: Probable nicotinate-nucleotide adenylyltransferase (219 aa).

This sequence belongs to the NadD family.

The catalysed reaction is nicotinate beta-D-ribonucleotide + ATP + H(+) = deamido-NAD(+) + diphosphate. The protein operates within cofactor biosynthesis; NAD(+) biosynthesis; deamido-NAD(+) from nicotinate D-ribonucleotide: step 1/1. In terms of biological role, catalyzes the reversible adenylation of nicotinate mononucleotide (NaMN) to nicotinic acid adenine dinucleotide (NaAD). The chain is Probable nicotinate-nucleotide adenylyltransferase from Pseudoalteromonas atlantica (strain T6c / ATCC BAA-1087).